The chain runs to 217 residues: uncharacterized protein (217 aa).

Residues Gln-98–Cys-203 enclose the PilZ domain.

This is an uncharacterized protein from Bacillus subtilis (strain 168).